We begin with the raw amino-acid sequence, 85 residues long: Small ribosomal subunit protein bS16 (85 aa).

This sequence belongs to the bacterial ribosomal protein bS16 family.

The sequence is that of Small ribosomal subunit protein bS16 from Pelobacter propionicus (strain DSM 2379 / NBRC 103807 / OttBd1).